Consider the following 197-residue polypeptide: Imidazoleglycerol-phosphate dehydratase (197 aa).

The protein belongs to the imidazoleglycerol-phosphate dehydratase family.

The protein localises to the cytoplasm. It catalyses the reaction D-erythro-1-(imidazol-4-yl)glycerol 3-phosphate = 3-(imidazol-4-yl)-2-oxopropyl phosphate + H2O. Its pathway is amino-acid biosynthesis; L-histidine biosynthesis; L-histidine from 5-phospho-alpha-D-ribose 1-diphosphate: step 6/9. The protein is Imidazoleglycerol-phosphate dehydratase of Syntrophus aciditrophicus (strain SB).